The chain runs to 663 residues: UvrABC system protein B (663 aa).

Residues 1 to 10 (MIDKRDDKPF) show a composition bias toward basic and acidic residues. Residues 1-23 (MIDKRDDKPFKLKSKYKPSGDQP) are disordered. Positions 31–418 (DNIEGGEKAQ…TNTIIEQIIR (388 aa)) constitute a Helicase ATP-binding domain. Residue 44-51 (GATGTGKT) participates in ATP binding. The Beta-hairpin motif lies at 97–120 (YYDYYQPEAYVPSSDTYIEKDSSV). A Helicase C-terminal domain is found at 435–597 (QMDDLLGEIN…IVPQTIKKDI (163 aa)). The region spanning 627–662 (KEAINALQKQMQEAAELLDFELAAQMRDLILELKLM) is the UVR domain.

This sequence belongs to the UvrB family. As to quaternary structure, forms a heterotetramer with UvrA during the search for lesions. Interacts with UvrC in an incision complex.

The protein resides in the cytoplasm. Its function is as follows. The UvrABC repair system catalyzes the recognition and processing of DNA lesions. A damage recognition complex composed of 2 UvrA and 2 UvrB subunits scans DNA for abnormalities. Upon binding of the UvrA(2)B(2) complex to a putative damaged site, the DNA wraps around one UvrB monomer. DNA wrap is dependent on ATP binding by UvrB and probably causes local melting of the DNA helix, facilitating insertion of UvrB beta-hairpin between the DNA strands. Then UvrB probes one DNA strand for the presence of a lesion. If a lesion is found the UvrA subunits dissociate and the UvrB-DNA preincision complex is formed. This complex is subsequently bound by UvrC and the second UvrB is released. If no lesion is found, the DNA wraps around the other UvrB subunit that will check the other stand for damage. This Streptococcus pyogenes serotype M18 (strain MGAS8232) protein is UvrABC system protein B.